Reading from the N-terminus, the 409-residue chain is Tyrosine--tRNA ligase (409 aa).

Tyr39 serves as a coordination point for L-tyrosine. Positions 44–53 (PTAASLHVGS) match the 'HIGH' region motif. Positions 176 and 180 each coordinate L-tyrosine. The 'KMSKS' region motif lies at 236 to 240 (KMGKT). Lys239 serves as a coordination point for ATP. Positions 346-408 (ISLVDALVGL…GKKAHGVIQA (63 aa)) constitute an S4 RNA-binding domain.

This sequence belongs to the class-I aminoacyl-tRNA synthetase family. TyrS type 1 subfamily. As to quaternary structure, homodimer.

It is found in the cytoplasm. It catalyses the reaction tRNA(Tyr) + L-tyrosine + ATP = L-tyrosyl-tRNA(Tyr) + AMP + diphosphate + H(+). Functionally, catalyzes the attachment of tyrosine to tRNA(Tyr) in a two-step reaction: tyrosine is first activated by ATP to form Tyr-AMP and then transferred to the acceptor end of tRNA(Tyr). The chain is Tyrosine--tRNA ligase from Zymomonas mobilis subsp. mobilis (strain ATCC 31821 / ZM4 / CP4).